We begin with the raw amino-acid sequence, 1361 residues long: DNA-directed RNA polymerase subunit beta' (1361 aa).

Zn(2+)-binding residues include Cys69, Cys71, Cys84, and Cys87. Asp460, Asp462, and Asp464 together coordinate Mg(2+). Zn(2+)-binding residues include Cys808, Cys882, Cys889, and Cys892.

Belongs to the RNA polymerase beta' chain family. In terms of assembly, the RNAP catalytic core consists of 2 alpha, 1 beta, 1 beta' and 1 omega subunit. When a sigma factor is associated with the core the holoenzyme is formed, which can initiate transcription. Mg(2+) is required as a cofactor. The cofactor is Zn(2+).

The enzyme catalyses RNA(n) + a ribonucleoside 5'-triphosphate = RNA(n+1) + diphosphate. Its function is as follows. DNA-dependent RNA polymerase catalyzes the transcription of DNA into RNA using the four ribonucleoside triphosphates as substrates. The sequence is that of DNA-directed RNA polymerase subunit beta' from Rickettsia bellii (strain RML369-C).